Here is a 49-residue protein sequence, read N- to C-terminus: uncharacterized protein (49 aa).

Residues 31–48 form a helical membrane-spanning segment; it reads PDLYTIIVSYFSIFSLFF.

The protein resides in the membrane. This is an uncharacterized protein from Saccharomyces cerevisiae (strain ATCC 204508 / S288c) (Baker's yeast).